A 325-amino-acid chain; its full sequence is L-lactate dehydrogenase 1 (325 aa).

NAD(+) is bound by residues Val-17, Asp-38, Lys-43, Tyr-68, and 82-83 (GA). Residues Gln-85, Arg-91, and 123–126 (NPVD) each bind substrate. Residues 121–123 (AAN) and Ser-146 contribute to the NAD(+) site. 151-154 (DTAR) lines the substrate pocket. Residues Arg-156 and His-171 each contribute to the beta-D-fructose 1,6-bisphosphate site. The active-site Proton acceptor is the His-178. Phosphotyrosine is present on Tyr-223. Thr-232 is a substrate binding site.

Belongs to the LDH/MDH superfamily. LDH family. Homotetramer.

It is found in the cytoplasm. It catalyses the reaction (S)-lactate + NAD(+) = pyruvate + NADH + H(+). It participates in fermentation; pyruvate fermentation to lactate; (S)-lactate from pyruvate: step 1/1. With respect to regulation, allosterically activated by fructose 1,6-bisphosphate (FBP). Functionally, catalyzes the conversion of lactate to pyruvate. In Lactococcus lactis subsp. lactis (strain IL1403) (Streptococcus lactis), this protein is L-lactate dehydrogenase 1.